Here is a 230-residue protein sequence, read N- to C-terminus: uncharacterized protein (230 aa).

Catalysis depends on charge relay system residues Ser124 and His158.

This sequence belongs to the peptidase S51 family.

This is an uncharacterized protein from Bacillus subtilis (strain 168).